The following is a 161-amino-acid chain: Cystatin cpi-2 (161 aa).

Positions 1 to 25 are cleaved as a signal peptide; the sequence is MMSTMSIKEGLLVILLSLFLFDTTA. The short motif at 76-78 is the Important for interaction with host LGMN element; the sequence is SND. A glycan (N-linked (GlcNAc...) asparagine) is linked at Asn-89. The Secondary area of contact motif lies at 93–97; it reads QVVAG. Cys-111 and Cys-124 form a disulfide bridge.

The protein belongs to the cystatin family.

Its function is as follows. Cysteine protease inhibitor which inhibits members of the peptidase C1 family. Also acts as an asparaginyl endopeptidase inhibitor. In the human host, inhibits CTSL/cathepsin L, CTSS/cathepsin S, CTSB/cathepsin B and asparaginyl endopeptidase LGMN/AEP which may cause defects in both antigen and MHC class II invariant chain CD74/Ii processing. This chain is Cystatin cpi-2, found in Brugia malayi (Filarial nematode worm).